Here is a 343-residue protein sequence, read N- to C-terminus: Tetraacyldisaccharide 4'-kinase (343 aa).

58–65 (VAGGAGKT) serves as a coordination point for ATP.

Belongs to the LpxK family.

The catalysed reaction is a lipid A disaccharide + ATP = a lipid IVA + ADP + H(+). Its pathway is glycolipid biosynthesis; lipid IV(A) biosynthesis; lipid IV(A) from (3R)-3-hydroxytetradecanoyl-[acyl-carrier-protein] and UDP-N-acetyl-alpha-D-glucosamine: step 6/6. Functionally, transfers the gamma-phosphate of ATP to the 4'-position of a tetraacyldisaccharide 1-phosphate intermediate (termed DS-1-P) to form tetraacyldisaccharide 1,4'-bis-phosphate (lipid IVA). This chain is Tetraacyldisaccharide 4'-kinase, found in Polaromonas naphthalenivorans (strain CJ2).